A 139-amino-acid chain; its full sequence is Probable DNA-binding protein (139 aa).

The segment at 97–139 (DEPSREASPDLGAAGAELEDESAQAGAVQGPETLRSQVLRART) is disordered.

In Homo sapiens (Human), this protein is Probable DNA-binding protein.